Reading from the N-terminus, the 442-residue chain is Tubulin beta chain (442 aa).

GTP-binding residues include Q11, E69, S138, G142, T143, G144, N204, and N226. Residue E69 coordinates Mg(2+).

The protein belongs to the tubulin family. As to quaternary structure, dimer of alpha and beta chains. A typical microtubule is a hollow water-filled tube with an outer diameter of 25 nm and an inner diameter of 15 nM. Alpha-beta heterodimers associate head-to-tail to form protofilaments running lengthwise along the microtubule wall with the beta-tubulin subunit facing the microtubule plus end conferring a structural polarity. Microtubules usually have 13 protofilaments but different protofilament numbers can be found in some organisms and specialized cells. Mg(2+) is required as a cofactor.

It is found in the cytoplasm. The protein localises to the cytoskeleton. Tubulin is the major constituent of microtubules, a cylinder consisting of laterally associated linear protofilaments composed of alpha- and beta-tubulin heterodimers. Microtubules grow by the addition of GTP-tubulin dimers to the microtubule end, where a stabilizing cap forms. Below the cap, tubulin dimers are in GDP-bound state, owing to GTPase activity of alpha-tubulin. The chain is Tubulin beta chain (bPT2) from Paramecium tetraurelia.